The following is a 450-amino-acid chain: Probable helicase D10 (450 aa).

In terms of domain architecture, Helicase ATP-binding spans 95–240; that stretch reads PIYEECDDTC…MFKDFFGYKI (146 aa). ATP is bound at residue 108 to 115; that stretch reads GKPGFGKT. Residues 193–196 carry the DEAH box motif; sequence DEVH. Positions 289-439 constitute a Helicase C-terminal domain; sequence NLAHLYVNMG…TITMTPEKAV (151 aa).

The enzyme catalyses ATP + H2O = ADP + phosphate + H(+). This chain is Probable helicase D10 (D10), found in Escherichia phage T5 (Enterobacteria phage T5).